A 519-amino-acid chain; its full sequence is Glutamate--cysteine ligase (519 aa).

It belongs to the glutamate--cysteine ligase type 1 family. Type 1 subfamily.

The catalysed reaction is L-cysteine + L-glutamate + ATP = gamma-L-glutamyl-L-cysteine + ADP + phosphate + H(+). It participates in sulfur metabolism; glutathione biosynthesis; glutathione from L-cysteine and L-glutamate: step 1/2. This Erwinia tasmaniensis (strain DSM 17950 / CFBP 7177 / CIP 109463 / NCPPB 4357 / Et1/99) protein is Glutamate--cysteine ligase.